A 151-amino-acid chain; its full sequence is MSTAARRRLMRDFKRMQTDPPAGVSASPVPDNVMTWNAVIIGPADTPFEDGTFRLVMQFEEQYPNKPPQVKFISEMFHPNVYATGELCLDILQNRWSPTYDVAAVLTSIQSLLNDPNTGSPANVEASNLYKDNRKEYTKRVRETVEKSWED.

In terms of domain architecture, UBC core spans 4–150 (AARRRLMRDF…VRETVEKSWE (147 aa)). Cysteine 88 serves as the catalytic Glycyl thioester intermediate.

Belongs to the ubiquitin-conjugating enzyme family.

The protein resides in the cytoplasm. Its subcellular location is the nucleus. It carries out the reaction S-ubiquitinyl-[E1 ubiquitin-activating enzyme]-L-cysteine + [E2 ubiquitin-conjugating enzyme]-L-cysteine = [E1 ubiquitin-activating enzyme]-L-cysteine + S-ubiquitinyl-[E2 ubiquitin-conjugating enzyme]-L-cysteine.. Its pathway is protein modification; protein ubiquitination. In terms of biological role, catalyzes the covalent attachment of ubiquitin to other proteins. Plays a role in transcription regulation by catalyzing the monoubiquitination of histone H2B to form H2BK123ub1. H2BK123ub1 gives a specific tag for epigenetic transcriptional activation and is also a prerequisite for H3K4me and H3K79me formation. Also involved in postreplication repair of UV-damaged DNA, in N-end rule-dependent protein degradation and in sporulation. The protein is Ubiquitin-conjugating enzyme E2 2 (UBC2) of Fusarium solani (Filamentous fungus).